The sequence spans 132 residues: Small ribosomal subunit protein uS8 (132 aa).

Belongs to the universal ribosomal protein uS8 family. In terms of assembly, part of the 30S ribosomal subunit. Contacts proteins S5 and S12.

Its function is as follows. One of the primary rRNA binding proteins, it binds directly to 16S rRNA central domain where it helps coordinate assembly of the platform of the 30S subunit. The chain is Small ribosomal subunit protein uS8 from Clostridium botulinum (strain Alaska E43 / Type E3).